Consider the following 54-residue polypeptide: MSKSKKKAETIFLVCEETGQYNYTLRKKPGGEKLRLKKYNPNLRKHTWHAEKKK.

Belongs to the bacterial ribosomal protein bL33 family.

This is Large ribosomal subunit protein bL33 from Rhodopirellula baltica (strain DSM 10527 / NCIMB 13988 / SH1).